The sequence spans 503 residues: Probable cytosol aminopeptidase (503 aa).

The Mn(2+) site is built by K270 and D275. The active site involves K282. Mn(2+) is bound by residues D293, D352, and E354. R356 is a catalytic residue.

It belongs to the peptidase M17 family. Mn(2+) is required as a cofactor.

It localises to the cytoplasm. It catalyses the reaction Release of an N-terminal amino acid, Xaa-|-Yaa-, in which Xaa is preferably Leu, but may be other amino acids including Pro although not Arg or Lys, and Yaa may be Pro. Amino acid amides and methyl esters are also readily hydrolyzed, but rates on arylamides are exceedingly low.. The catalysed reaction is Release of an N-terminal amino acid, preferentially leucine, but not glutamic or aspartic acids.. Presumably involved in the processing and regular turnover of intracellular proteins. Catalyzes the removal of unsubstituted N-terminal amino acids from various peptides. This is Probable cytosol aminopeptidase from Erwinia tasmaniensis (strain DSM 17950 / CFBP 7177 / CIP 109463 / NCPPB 4357 / Et1/99).